A 366-amino-acid polypeptide reads, in one-letter code: MIRLLIADDSALVRKLLEGVFLEEGDFEIRTARTGLEALDMVRAFDPHVVTLDVQMPGMDGLTCLGRIMLEAPRPVVMISSLTEQNADATLSAMALGAVDVIAKPGGTFSLELDRLRPLLVATIRSAAQAKIRPTHRLADRIRHQFRDAASSPRAKAARRGAARQRAKAEPAPGLVLIGTSTGGPAALNILLPQLPADFPWPVLIAQHLPATFTGAFAKRLDRECALNVVEVDVPRQLEPGTVYIGRGDADVIVAPRPSGLIALSVPARRDYPWHPSVERMVDSALEHYDGKRLLGVLMTGMGDDGATAMTRLQALGGRTIAEAESTAVVWGMPGELVRQGGATLVLPVEEIAAAVIEWGNADAAD.

The Response regulatory domain maps to 3-119 (RLLIADDSAL…SLELDRLRPL (117 aa)). Asp53 bears the 4-aspartylphosphate mark. Residues 149-168 (AASSPRAKAARRGAARQRAK) are disordered. Positions 156–166 (KAARRGAARQR) are enriched in basic residues. Residues 171–363 (PAPGLVLIGT…AAVIEWGNAD (193 aa)) form the CheB-type methylesterase domain. Catalysis depends on residues Ser181, His208, and Asp305.

It belongs to the CheB family. Post-translationally, phosphorylated by CheA. Phosphorylation of the N-terminal regulatory domain activates the methylesterase activity.

The protein localises to the cytoplasm. The enzyme catalyses [protein]-L-glutamate 5-O-methyl ester + H2O = L-glutamyl-[protein] + methanol + H(+). It carries out the reaction L-glutaminyl-[protein] + H2O = L-glutamyl-[protein] + NH4(+). In terms of biological role, involved in chemotaxis. Part of a chemotaxis signal transduction system that modulates chemotaxis in response to various stimuli. Catalyzes the demethylation of specific methylglutamate residues introduced into the chemoreceptors (methyl-accepting chemotaxis proteins or MCP) by CheR. Also mediates the irreversible deamidation of specific glutamine residues to glutamic acid. The protein is Protein-glutamate methylesterase/protein-glutamine glutaminase 2 of Rhodopseudomonas palustris (strain BisB18).